A 154-amino-acid chain; its full sequence is MAPARAGCCPLLLLLLGLRVAQIPVSAKPKDMTSSQWFKTQHVQPSPEACYSAMSNISKYIEWCKDLNTFLHEPFSSVATTCQTPNIACKNRHKNCHQSSGPMSLTMCELTSGKYPNCRYKEKHLNAPYIVACDPPQQGDPGYPLVPVHLDKVV.

The first 27 residues, 1–27, serve as a signal peptide directing secretion; sequence MAPARAGCCPLLLLLLGLRVAQIPVSA. His-42 (proton acceptor) is an active-site residue. 3 disulfide bridges follow: Cys-64/Cys-118, Cys-82/Cys-133, and Cys-89/Cys-96. Substrate is bound by residues 65-69 and Lys-90; that span reads KDLNT. The active-site Proton donor is the His-149.

This sequence belongs to the pancreatic ribonuclease family.

The protein resides in the secreted. Functionally, has a low ribonuclease activity. The chain is Ribonuclease 8 (RNASE8) from Miopithecus talapoin (Angolan talapoin).